A 217-amino-acid polypeptide reads, in one-letter code: Ras-related protein RABA2a (217 aa).

A GTP-binding site is contributed by 19 to 26; it reads GDSGVGKS. Positions 41 to 49 match the Effector region motif; the sequence is SKSTIGVEF. Residues 67–71, 125–128, and 155–156 contribute to the GTP site; these read DTAGQ, NKTD, and SA. Cys-213 carries S-palmitoyl cysteine lipidation. Cys-214 bears the Cysteine methyl ester mark. Cys-214 carries S-geranylgeranyl cysteine lipidation. A propeptide spans 215-217 (removed in mature form); sequence SSS.

This sequence belongs to the small GTPase superfamily. Rab family. Expressed in root tips.

Its subcellular location is the endosome membrane. It is found in the golgi apparatus. It localises to the trans-Golgi network membrane. Functionally, intracellular vesicle trafficking and protein transport. This Arabidopsis thaliana (Mouse-ear cress) protein is Ras-related protein RABA2a (RABA2A).